We begin with the raw amino-acid sequence, 289 residues long: Formamidopyrimidine-DNA glycosylase (289 aa).

Pro2 functions as the Schiff-base intermediate with DNA in the catalytic mechanism. Glu3 acts as the Proton donor in catalysis. Lys61 (proton donor; for beta-elimination activity) is an active-site residue. 3 residues coordinate DNA: His97, Arg119, and Lys168. The FPG-type zinc finger occupies 254-288; sequence NAYGRAGKPCPRCGEPIVRVQWTNRSSHFCPQCQS. Arg278 acts as the Proton donor; for delta-elimination activity in catalysis.

The protein belongs to the FPG family. In terms of assembly, monomer. The cofactor is Zn(2+).

It carries out the reaction Hydrolysis of DNA containing ring-opened 7-methylguanine residues, releasing 2,6-diamino-4-hydroxy-5-(N-methyl)formamidopyrimidine.. It catalyses the reaction 2'-deoxyribonucleotide-(2'-deoxyribose 5'-phosphate)-2'-deoxyribonucleotide-DNA = a 3'-end 2'-deoxyribonucleotide-(2,3-dehydro-2,3-deoxyribose 5'-phosphate)-DNA + a 5'-end 5'-phospho-2'-deoxyribonucleoside-DNA + H(+). Functionally, involved in base excision repair of DNA damaged by oxidation or by mutagenic agents. Acts as a DNA glycosylase that recognizes and removes damaged bases. Has a preference for oxidized purines, such as 7,8-dihydro-8-oxoguanine (8-oxoG). Has AP (apurinic/apyrimidinic) lyase activity and introduces nicks in the DNA strand. Cleaves the DNA backbone by beta-delta elimination to generate a single-strand break at the site of the removed base with both 3'- and 5'-phosphates. The chain is Formamidopyrimidine-DNA glycosylase from Corynebacterium urealyticum (strain ATCC 43042 / DSM 7109).